The chain runs to 153 residues: UPF0756 membrane protein BCB4264_A4705 (153 aa).

4 helical membrane-spanning segments follow: residues 8–28, 54–74, 87–107, and 117–137; these read FLFILLIIGLIAKNQSLTVAI, LGVTVITIAVLVPIATGEIGF, WIALASGVAVALLAKGGVQLL, and LVFGTVIAVALFNGVAVGPLI.

It belongs to the UPF0756 family.

It localises to the cell membrane. This Bacillus cereus (strain B4264) protein is UPF0756 membrane protein BCB4264_A4705.